The sequence spans 568 residues: Potassium-transporting ATPase potassium-binding subunit (568 aa).

12 consecutive transmembrane segments (helical) span residues 7 to 27 (LLIT…GNII), 67 to 87 (YALA…TLLV), 137 to 157 (GLTV…FALI), 180 to 200 (LYLL…QGVI), 258 to 278 (FIQI…FGQV), 288 to 308 (LLWA…YAEL), 332 to 352 (FGIL…CGAV), 361 to 381 (ALGG…FGGV), 384 to 404 (GLYG…LMIG), 421 to 441 (MVAL…ALTI), 488 to 508 (LLLA…VLAI), and 535 to 555 (LLIL…LILG).

This sequence belongs to the KdpA family. The system is composed of three essential subunits: KdpA, KdpB and KdpC.

The protein localises to the cell inner membrane. Part of the high-affinity ATP-driven potassium transport (or Kdp) system, which catalyzes the hydrolysis of ATP coupled with the electrogenic transport of potassium into the cytoplasm. This subunit binds the periplasmic potassium ions and delivers the ions to the membrane domain of KdpB through an intramembrane tunnel. The chain is Potassium-transporting ATPase potassium-binding subunit from Photorhabdus laumondii subsp. laumondii (strain DSM 15139 / CIP 105565 / TT01) (Photorhabdus luminescens subsp. laumondii).